Reading from the N-terminus, the 218-residue chain is Small ribosomal subunit protein uS3c (218 aa).

The KH type-2 domain maps to Val47–Ser118.

This sequence belongs to the universal ribosomal protein uS3 family. Part of the 30S ribosomal subunit.

It localises to the plastid. Its subcellular location is the chloroplast. This Arabis hirsuta (Hairy rock-cress) protein is Small ribosomal subunit protein uS3c (rps3).